The following is a 315-amino-acid chain: S-methyl-5'-thioadenosine phosphorylase (315 aa).

Phosphate-binding positions include S22, 65–66, and 98–99; these read RH and SA. M205 contributes to the substrate binding site. S206 contributes to the phosphate binding site. 229 to 231 lines the substrate pocket; sequence DYD.

The protein belongs to the PNP/MTAP phosphorylase family. MTAP subfamily. As to quaternary structure, homotrimer.

The protein localises to the cytoplasm. Its subcellular location is the nucleus. It carries out the reaction S-methyl-5'-thioadenosine + phosphate = 5-(methylsulfanyl)-alpha-D-ribose 1-phosphate + adenine. Its pathway is amino-acid biosynthesis; L-methionine biosynthesis via salvage pathway; S-methyl-5-thio-alpha-D-ribose 1-phosphate from S-methyl-5'-thioadenosine (phosphorylase route): step 1/1. Functionally, catalyzes the reversible phosphorylation of S-methyl-5'-thioadenosine (MTA) to adenine and 5-methylthioribose-1-phosphate. Involved in the breakdown of MTA, a major by-product of polyamine biosynthesis. Responsible for the first step in the methionine salvage pathway after MTA has been generated from S-adenosylmethionine. Has broad substrate specificity with 6-aminopurine nucleosides as preferred substrates. The chain is S-methyl-5'-thioadenosine phosphorylase from Mycosarcoma maydis (Corn smut fungus).